The primary structure comprises 175 residues: Sec-independent protein translocase protein TatB (175 aa).

The chain crosses the membrane as a helical span at residues Met1 to Gly21. A compositionally biased stretch (low complexity) spans Gly99 to Asp115. Residues Gly99 to Ser118 are disordered.

Belongs to the TatB family. The Tat system comprises two distinct complexes: a TatABC complex, containing multiple copies of TatA, TatB and TatC subunits, and a separate TatA complex, containing only TatA subunits. Substrates initially bind to the TatABC complex, which probably triggers association of the separate TatA complex to form the active translocon.

The protein localises to the cell inner membrane. In terms of biological role, part of the twin-arginine translocation (Tat) system that transports large folded proteins containing a characteristic twin-arginine motif in their signal peptide across membranes. Together with TatC, TatB is part of a receptor directly interacting with Tat signal peptides. TatB may form an oligomeric binding site that transiently accommodates folded Tat precursor proteins before their translocation. The sequence is that of Sec-independent protein translocase protein TatB from Burkholderia thailandensis (strain ATCC 700388 / DSM 13276 / CCUG 48851 / CIP 106301 / E264).